Here is a 246-residue protein sequence, read N- to C-terminus: Sugar fermentation stimulation protein homolog (246 aa).

It belongs to the SfsA family.

The polypeptide is Sugar fermentation stimulation protein homolog (Prochlorococcus marinus (strain MIT 9301)).